The sequence spans 526 residues: Rho guanine nucleotide exchange factor 3 (526 aa).

The tract at residues 20–40 (ELPPASGPAKDAEEPSNKRVK) is disordered. A phosphoserine mark is found at S47 and S70. Residues 122-304 (KRQEAIFELS…QGIVAEINTK (183 aa)) enclose the DH domain. A PH domain is found at 291–449 (INIIQGIVAE…WLNCIRQAKE (159 aa)). 2 disordered regions span residues 464–502 (EGSF…TSEV) and 507–526 (EHME…ESNV). A compositionally biased stretch (polar residues) spans 466–475 (SFLNPTTGSR).

In terms of assembly, interacts with RHOA and RHOB.

It is found in the cytoplasm. In terms of biological role, acts as a guanine nucleotide exchange factor (GEF) for RhoA and RhoB GTPases. This is Rho guanine nucleotide exchange factor 3 (ARHGEF3) from Macaca fascicularis (Crab-eating macaque).